A 209-amino-acid polypeptide reads, in one-letter code: Ribosomal RNA small subunit methyltransferase G (209 aa).

Residues glycine 71, phenylalanine 76, alanine 122–glutamate 123, and arginine 135 each bind S-adenosyl-L-methionine.

The protein belongs to the methyltransferase superfamily. RNA methyltransferase RsmG family.

The protein localises to the cytoplasm. Specifically methylates the N7 position of a guanine in 16S rRNA. The chain is Ribosomal RNA small subunit methyltransferase G from Flavobacterium johnsoniae (strain ATCC 17061 / DSM 2064 / JCM 8514 / BCRC 14874 / CCUG 350202 / NBRC 14942 / NCIMB 11054 / UW101) (Cytophaga johnsonae).